Consider the following 201-residue polypeptide: Basic helix-loop-helix transcription factor scleraxis (201 aa).

2 disordered regions span residues 1-92 (MSFA…NSVN) and 148-177 (AFFH…QPKQ). Positions 59-69 (RRAGGGGPGGR) are enriched in gly residues. The segment covering 70–88 (PGREPRQRHTANARERDRT) has biased composition (basic and acidic residues). In terms of domain architecture, bHLH spans 75–127 (RQRHTANARERDRTNSVNTAFTALRTLIPTEPADRKLSKIETLRLASSYISHL). The span at 157 to 167 (SPPPPPPPPPA) shows a compositional bias: pro residues.

Efficient DNA binding requires dimerization with another bHLH protein. Dimerizes and binds the E-box consensus sequence with E12.

It is found in the nucleus. Plays an early essential role in mesoderm formation, as well as a later role in formation of somite-derived chondrogenic lineages. This chain is Basic helix-loop-helix transcription factor scleraxis (SCX), found in Homo sapiens (Human).